The primary structure comprises 147 residues: Acidic phospholipase A2 1 (147 aa).

Residues 1-19 form the signal peptide; it reads MNPAHLLVLAAVCVSLLGA. Residues 20-27 constitute a propeptide that is removed on maturation; that stretch reads AIVPPQPL. Intrachain disulfides connect C38/C99, C54/C146, C56/C72, C71/C127, C78/C120, C88/C113, and C106/C118. 3 residues coordinate Ca(2+): Y55, G57, and G59. Residue H75 is part of the active site. Residue D76 participates in Ca(2+) binding. Residue D121 is part of the active site.

It belongs to the phospholipase A2 family. Group I subfamily. D49 sub-subfamily. Ca(2+) is required as a cofactor. In terms of tissue distribution, expressed by the venom gland.

It localises to the secreted. It catalyses the reaction a 1,2-diacyl-sn-glycero-3-phosphocholine + H2O = a 1-acyl-sn-glycero-3-phosphocholine + a fatty acid + H(+). Its function is as follows. PLA2 catalyzes the calcium-dependent hydrolysis of the 2-acyl groups in 3-sn-phosphoglycerides. This chain is Acidic phospholipase A2 1, found in Bungarus flaviceps flaviceps (Red-headed krait).